Consider the following 109-residue polypeptide: UPF0449 protein C19orf25 homolog (109 aa).

Y63 is modified (phosphotyrosine).

It belongs to the UPF0449 family.

In Rattus norvegicus (Rat), this protein is UPF0449 protein C19orf25 homolog.